The following is an 89-amino-acid chain: Rho beta-crystallin (89 aa).

H31 is a substrate binding site.

The protein belongs to the aldo/keto reductase family. As to quaternary structure, monomer.

This is Rho beta-crystallin from Lepidodactylus lugubris (Mourning gecko).